The primary structure comprises 63 residues: Large ribosomal subunit protein uL29 (63 aa).

It belongs to the universal ribosomal protein uL29 family.

In Klebsiella pneumoniae (strain 342), this protein is Large ribosomal subunit protein uL29.